Reading from the N-terminus, the 163-residue chain is Outer membrane protein assembly factor BamE (163 aa).

The N-terminal stretch at 1–22 (MINKKQSLTLLSAIALSVSLSA) is a signal peptide. Cysteine 23 carries N-palmitoyl cysteine lipidation. Cysteine 23 carries S-diacylglycerol cysteine lipidation. Positions 122–163 (EQSKLPMVNTTESAPQVPAQRPDEKPLVKENQTEAQVQKPIK) are disordered. Over residues 142–153 (RPDEKPLVKENQ) the composition is skewed to basic and acidic residues.

Belongs to the BamE family. As to quaternary structure, part of the Bam complex.

It is found in the cell outer membrane. Its function is as follows. Part of the outer membrane protein assembly complex, which is involved in assembly and insertion of beta-barrel proteins into the outer membrane. The sequence is that of Outer membrane protein assembly factor BamE from Shewanella oneidensis (strain ATCC 700550 / JCM 31522 / CIP 106686 / LMG 19005 / NCIMB 14063 / MR-1).